The primary structure comprises 365 residues: tRNA(Met) cytidine acetate ligase (365 aa).

ATP-binding positions include 7–20 (IAEF…HKYL), Gly-96, Asn-152, and Arg-175.

It belongs to the TmcAL family.

Its subcellular location is the cytoplasm. The catalysed reaction is cytidine(34) in elongator tRNA(Met) + acetate + ATP = N(4)-acetylcytidine(34) in elongator tRNA(Met) + AMP + diphosphate. Its function is as follows. Catalyzes the formation of N(4)-acetylcytidine (ac(4)C) at the wobble position of elongator tRNA(Met), using acetate and ATP as substrates. First activates an acetate ion to form acetyladenylate (Ac-AMP) and then transfers the acetyl group to tRNA to form ac(4)C34. In Streptococcus pneumoniae serotype 19F (strain G54), this protein is tRNA(Met) cytidine acetate ligase.